Here is a 224-residue protein sequence, read N- to C-terminus: Deoxyribose-phosphate aldolase (224 aa).

Residue Asp-98 is the Proton donor/acceptor of the active site. Lys-159 (schiff-base intermediate with acetaldehyde) is an active-site residue. The active-site Proton donor/acceptor is Lys-189.

It belongs to the DeoC/FbaB aldolase family. DeoC type 1 subfamily.

The protein resides in the cytoplasm. It carries out the reaction 2-deoxy-D-ribose 5-phosphate = D-glyceraldehyde 3-phosphate + acetaldehyde. It participates in carbohydrate degradation; 2-deoxy-D-ribose 1-phosphate degradation; D-glyceraldehyde 3-phosphate and acetaldehyde from 2-deoxy-alpha-D-ribose 1-phosphate: step 2/2. In terms of biological role, catalyzes a reversible aldol reaction between acetaldehyde and D-glyceraldehyde 3-phosphate to generate 2-deoxy-D-ribose 5-phosphate. In Methanothermobacter thermautotrophicus (strain ATCC 29096 / DSM 1053 / JCM 10044 / NBRC 100330 / Delta H) (Methanobacterium thermoautotrophicum), this protein is Deoxyribose-phosphate aldolase.